A 526-amino-acid polypeptide reads, in one-letter code: D-arabinono-1,4-lactone oxidase (526 aa).

The FAD-binding PCMH-type domain occupies 19-193 (YSAKPERYFQ…VSATIRVVPG (175 aa)). His56 bears the Pros-8alpha-FAD histidine mark.

It belongs to the oxygen-dependent FAD-linked oxidoreductase family. Monomer. FAD serves as cofactor. Post-translationally, the N-terminus is blocked.

It localises to the mitochondrion membrane. The enzyme catalyses D-arabinono-1,4-lactone + O2 = dehydro-D-arabinono-1,4-lactone + H2O2 + H(+). The protein operates within cofactor biosynthesis; D-erythroascorbate biosynthesis; dehydro-D-arabinono-1,4-lactone from D-arabinose: step 2/2. Its function is as follows. Can oxidize L-gulono-1,4-lactone as well as D-arabinono-1,4-lactone and L-galactono-1,4-lactone. This is D-arabinono-1,4-lactone oxidase (ALO1) from Saccharomyces cerevisiae (strain ATCC 204508 / S288c) (Baker's yeast).